The following is a 253-amino-acid chain: Ribosome-inactivating protein saporin-5 (253 aa).

E176 is an active-site residue.

The protein belongs to the ribosome-inactivating protein family. Type 1 RIP subfamily.

The catalysed reaction is Endohydrolysis of the N-glycosidic bond at one specific adenosine on the 28S rRNA.. Ribosome-inactivating protein of type 1, inhibits protein synthesis in animal cells. The chain is Ribosome-inactivating protein saporin-5 (SAP5) from Saponaria officinalis (Common soapwort).